A 355-amino-acid polypeptide reads, in one-letter code: Probable zinc transporter 12 (355 aa).

The signal sequence occupies residues 1-25 (MSRFRKTLVSAFVLCLVIFPLLVSA). At 26 to 50 (AEEENQCGGSKGGSAAEKASALKYK) the chain is on the extracellular side. The chain crosses the membrane as a helical span at residues 51–71 (IIAFFSILIAGVFGVCLPIFG). The Cytoplasmic portion of the chain corresponds to 72 to 77 (LKTESN). Residues 78-98 (FFMYVKAFAAGVILATGFVHI) traverse the membrane as a helical segment. Topologically, residues 99 to 116 (LPDATESLTSSCLGEEPP) are extracellular. Residues 117–137 (WGDFPMTGLVAMAASILTMLI) form a helical membrane-spanning segment. The Cytoplasmic segment spans residues 138–200 (ESFASGYLNR…DDDHIDMRKK (63 aa)). Residues 156-183 (TLPVSTGGEEEHAHTGSAHTHASQGHSH) are disordered. Residues 201 to 221 (IVTQILELGIVVHSVIIGISL) traverse the membrane as a helical segment. At 222 to 231 (GASPSVSTIK) the chain is on the extracellular side. The helical transmembrane segment at 232 to 252 (PLIAAITFHQLFEGFGLGGCI) threads the bilayer. The Cytoplasmic segment spans residues 253–261 (SEAKFRVKK). A helical transmembrane segment spans residues 262–282 (IWVMLMFFALTAPIGIGIGIG). Topologically, residues 283-302 (VAEIYNENSPMALKVSGFLN) are extracellular. Residues 303-323 (ATASGILIYMALVDLVAPLFM) form a helical membrane-spanning segment. The Cytoplasmic segment spans residues 324-334 (NQKTQSSMKIQ). A helical transmembrane segment spans residues 335–355 (VACSVSLVVGAGLMSLLAIWA).

This sequence belongs to the ZIP transporter (TC 2.A.5) family.

It is found in the cell membrane. Its function is as follows. Zinc transporter involved in zinc uptake in roots. Targeted by BZIP23 transcription factor in response to zinc-deficient conditions. This chain is Probable zinc transporter 12 (ZIP12), found in Arabidopsis thaliana (Mouse-ear cress).